We begin with the raw amino-acid sequence, 331 residues long: Pyruvate synthase subunit PorB (331 aa).

The [4Fe-4S] cluster site is built by cysteine 21, cysteine 24, cysteine 59, and cysteine 222.

In terms of assembly, heterotetramer of one alpha, one beta, one delta and one gamma chain. Requires [4Fe-4S] cluster as cofactor.

It catalyses the reaction 2 oxidized [2Fe-2S]-[ferredoxin] + pyruvate + CoA = 2 reduced [2Fe-2S]-[ferredoxin] + acetyl-CoA + CO2 + H(+). This chain is Pyruvate synthase subunit PorB (porB), found in Pyrococcus furiosus (strain ATCC 43587 / DSM 3638 / JCM 8422 / Vc1).